Consider the following 360-residue polypeptide: Phosphate acyltransferase (360 aa).

It belongs to the PlsX family. As to quaternary structure, homodimer. Probably interacts with PlsY.

Its subcellular location is the cytoplasm. The enzyme catalyses a fatty acyl-[ACP] + phosphate = an acyl phosphate + holo-[ACP]. The protein operates within lipid metabolism; phospholipid metabolism. In terms of biological role, catalyzes the reversible formation of acyl-phosphate (acyl-PO(4)) from acyl-[acyl-carrier-protein] (acyl-ACP). This enzyme utilizes acyl-ACP as fatty acyl donor, but not acyl-CoA. This chain is Phosphate acyltransferase, found in Thermobifida fusca (strain YX).